A 148-amino-acid chain; its full sequence is Aspartate 1-decarboxylase (148 aa).

Residue serine 25 is the Schiff-base intermediate with substrate; via pyruvic acid of the active site. Position 25 is a pyruvic acid (Ser) (serine 25). Threonine 57 serves as a coordination point for substrate. Tyrosine 58 functions as the Proton donor in the catalytic mechanism. Position 73–75 (glycine 73–alanine 75) interacts with substrate.

Belongs to the PanD family. As to quaternary structure, heterooctamer of four alpha and four beta subunits. The cofactor is pyruvate. Is synthesized initially as an inactive proenzyme, which is activated by self-cleavage at a specific serine bond to produce a beta-subunit with a hydroxyl group at its C-terminus and an alpha-subunit with a pyruvoyl group at its N-terminus.

Its subcellular location is the cytoplasm. It catalyses the reaction L-aspartate + H(+) = beta-alanine + CO2. It participates in cofactor biosynthesis; (R)-pantothenate biosynthesis; beta-alanine from L-aspartate: step 1/1. Functionally, catalyzes the pyruvoyl-dependent decarboxylation of aspartate to produce beta-alanine. This chain is Aspartate 1-decarboxylase, found in Rhodococcus opacus (strain B4).